The following is a 308-amino-acid chain: Olfactory receptor OR9H1 (308 aa).

Topologically, residues 1 to 26 (MVNFTHVSEFVLLGFQGGPGMQAMLF) are extracellular. Residues 27-47 (LIFLILYGIAVVGNLGMIVII) traverse the membrane as a helical segment. The Cytoplasmic segment spans residues 48–58 (WVDAHLHTPMY). A helical transmembrane segment spans residues 59–81 (AFLQSLSLLDICYSSTIAPRALA). At 82-95 (NSMQEDHTISFGGC) the chain is on the extracellular side. An intrachain disulfide couples C95 to C177. Residues 96-116 (AAQFFFLSLFGITEAFLLAAM) traverse the membrane as a helical segment. Residues 117-137 (AYDRFIAICNPLLYSVSMSHQ) lie on the Cytoplasmic side of the membrane. The helical transmembrane segment at 138 to 158 (VCVLLISGSYLWGVVNAIAQT) threads the bilayer. At 159 to 203 (TMTFRLPFCGSNEINDFFCDVPPLLSLSCSDTFINQLVLLGLCGS) the chain is on the extracellular side. The helical transmembrane segment at 204–224 (IIVSTFLIVLVSYIYIISTIL) threads the bilayer. The Cytoplasmic segment spans residues 225–245 (RIPTMQGCQKAFSTCASHLTG). A helical transmembrane segment spans residues 246 to 266 (VCLFFGTVFFMYAQPSAIFFM). The Extracellular segment spans residues 267 to 269 (EQS). A helical transmembrane segment spans residues 270–290 (KIVSIFYTMVIPMLNPLIYSL). Over 291–308 (RNKEVKQALRRSMQKLSL) the chain is Cytoplasmic.

It belongs to the G-protein coupled receptor 1 family.

It localises to the cell membrane. In terms of biological role, odorant receptor. This is Olfactory receptor OR9H1 from Homo sapiens (Human).